The sequence spans 408 residues: Imidazolonepropionase (408 aa).

Fe(3+) contacts are provided by histidine 73 and histidine 75. Positions 73 and 75 each coordinate Zn(2+). Residues arginine 82, tyrosine 145, and histidine 178 each contribute to the 4-imidazolone-5-propanoate site. Tyrosine 145 lines the N-formimidoyl-L-glutamate pocket. Fe(3+) is bound at residue histidine 243. Zn(2+) is bound at residue histidine 243. Residue glutamine 246 participates in 4-imidazolone-5-propanoate binding. Aspartate 318 serves as a coordination point for Fe(3+). A Zn(2+)-binding site is contributed by aspartate 318. Asparagine 320 and glycine 322 together coordinate N-formimidoyl-L-glutamate. Serine 323 serves as a coordination point for 4-imidazolone-5-propanoate.

Belongs to the metallo-dependent hydrolases superfamily. HutI family. Zn(2+) is required as a cofactor. The cofactor is Fe(3+).

Its subcellular location is the cytoplasm. The catalysed reaction is 4-imidazolone-5-propanoate + H2O = N-formimidoyl-L-glutamate. The protein operates within amino-acid degradation; L-histidine degradation into L-glutamate; N-formimidoyl-L-glutamate from L-histidine: step 3/3. Functionally, catalyzes the hydrolytic cleavage of the carbon-nitrogen bond in imidazolone-5-propanoate to yield N-formimidoyl-L-glutamate. It is the third step in the universal histidine degradation pathway. The chain is Imidazolonepropionase from Shewanella sediminis (strain HAW-EB3).